Consider the following 181-residue polypeptide: Large ribosomal subunit protein uL6 (181 aa).

This sequence belongs to the universal ribosomal protein uL6 family. Part of the 50S ribosomal subunit.

Its function is as follows. This protein binds to the 23S rRNA, and is important in its secondary structure. It is located near the subunit interface in the base of the L7/L12 stalk, and near the tRNA binding site of the peptidyltransferase center. The polypeptide is Large ribosomal subunit protein uL6 (Synechococcus sp. (strain JA-2-3B'a(2-13)) (Cyanobacteria bacterium Yellowstone B-Prime)).